The primary structure comprises 335 residues: MMLNATEFLTPNAINVDTVNETIAKVTLEPLERGFGHTLGNALRRILLSSLPGAAVIEAEIDGVDHEYSTLEGLQEDVLDLLLNLKGLAITLHDQNEVFLTLDKQGPGTITAADITLPHNVDIINPELVLGTLSDRGHLKMRLRVVMGRGYEPANQRREDGDTKAIGRLKLDASFSPVLRVAYQVENARVEQRTDLDRLIIELETNGTIDPEEAIRKAATILQQQISIFVDLEAEEAPEPVKEKEEVDPVLLRPVDDLELTVRSANCLKAENIYYIGDLVQRSETELLKTPNLGKKSLTEIKDVLASKDLELGMRLDNWPPADLRVDDRFSYRSR.

An alpha N-terminal domain (alpha-NTD) region spans residues 1 to 233; that stretch reads MMLNATEFLT…QQISIFVDLE (233 aa). Positions 247–335 are alpha C-terminal domain (alpha-CTD); the sequence is VDPVLLRPVD…VDDRFSYRSR (89 aa).

It belongs to the RNA polymerase alpha chain family. In terms of assembly, homodimer. The RNAP catalytic core consists of 2 alpha, 1 beta, 1 beta' and 1 omega subunit. When a sigma factor is associated with the core the holoenzyme is formed, which can initiate transcription.

It catalyses the reaction RNA(n) + a ribonucleoside 5'-triphosphate = RNA(n+1) + diphosphate. Its function is as follows. DNA-dependent RNA polymerase catalyzes the transcription of DNA into RNA using the four ribonucleoside triphosphates as substrates. The polypeptide is DNA-directed RNA polymerase subunit alpha (Psychrobacter arcticus (strain DSM 17307 / VKM B-2377 / 273-4)).